A 441-amino-acid chain; its full sequence is Protein arginine methyltransferase NDUFAF7, mitochondrial (441 aa).

Residues 1 to 46 (MNFLAAAGVRRLCAMRAVLPCLWRGKYFSSGNEPAENNTVTPMLRH) constitute a mitochondrion transit peptide. Positions 415-434 (GRNHQTNARQSKPSPSPVAG) are disordered. A compositionally biased stretch (polar residues) spans 418–427 (HQTNARQSKP).

This sequence belongs to the NDUFAF7 family. As to quaternary structure, interacts with NDUFS2.

It is found in the mitochondrion. The enzyme catalyses L-arginyl-[protein] + 2 S-adenosyl-L-methionine = N(omega),N(omega)'-dimethyl-L-arginyl-[protein] + 2 S-adenosyl-L-homocysteine + 2 H(+). In terms of biological role, arginine methyltransferase involved in the assembly or stability of mitochondrial NADH:ubiquinone oxidoreductase complex (complex I). Acts by mediating symmetric dimethylation of 'Arg-118' of NDUFS2 after it assembles into the complex I, stabilizing the early intermediate complex. The chain is Protein arginine methyltransferase NDUFAF7, mitochondrial from Bos taurus (Bovine).